The chain runs to 928 residues: Protein Niban 1 (928 aa).

Glycine 2 is lipidated: N-myristoyl glycine. Residues serine 579, serine 582, serine 596, serine 602, and serine 646 each carry the phosphoserine modification. Positions 580–596 are enriched in polar residues; that stretch reads VSSLTDLKPPTGSNQAS. The tract at residues 580–600 is disordered; sequence VSSLTDLKPPTGSNQASPARR. 2 disordered regions span residues 618–654 and 669–707; these read VFQE…GTEQ and ATED…TASG. A compositionally biased stretch (acidic residues) spans 690–701; the sequence is LEDEEPAQEEPE. A Phosphoserine modification is found at serine 708. Disordered regions lie at residues 723–877 and 899–928; these read PVDS…ATAS and PNPD…PSEE. Positions 801–818 are enriched in low complexity; sequence GGLTEEPLGPMEGELPGE. Positions 825 to 834 are enriched in basic and acidic residues; sequence HEGRGGKCTE. Over residues 865–877 the composition is skewed to low complexity; sequence MGGQSSAAQATAS. Positions 905–915 are enriched in basic and acidic residues; that stretch reads LSHKDDVKEGE. Residue serine 926 is modified to Phosphoserine.

Belongs to the Niban family. Expressed in various types of thyroid tumor such as papillary thyroid carcinomas and oxyphilic thyroid tumors but not in normal thyroid tissue (at protein level). Strongly expressed in heart, skeletal muscle, pancreas, white blood cells and prostate with moderate expression in colon and spleen. Expressed in renal carcinoma cells but not in normal kidney.

Its subcellular location is the cytoplasm. The protein resides in the membrane. Regulates phosphorylation of a number of proteins involved in translation regulation including EIF2A, EIF4EBP1 and RPS6KB1. May be involved in the endoplasmic reticulum stress response. In Homo sapiens (Human), this protein is Protein Niban 1.